Consider the following 130-residue polypeptide: Anti-adapter protein IraD (130 aa).

Belongs to the GpW/Gp25 family. IraD subfamily. In terms of assembly, interacts with RssB.

It is found in the cytoplasm. Its function is as follows. Inhibits RpoS proteolysis by regulating RssB activity, thereby increasing the stability of the sigma stress factor RpoS during oxidative stress. Its effect on RpoS stability is due to its interaction with RssB, which probably blocks the interaction of RssB with RpoS, and the consequent delivery of the RssB-RpoS complex to the ClpXP protein degradation pathway. This chain is Anti-adapter protein IraD, found in Escherichia coli O9:H4 (strain HS).